The chain runs to 911 residues: Inositol 1,4,5-triphosphate receptor associated 1 (911 aa).

Over residues 1 to 11 the composition is skewed to basic and acidic residues; it reads MVKAPQSEERL. Disordered stretches follow at residues 1-21, 39-122, 174-405, and 478-498; these read MVKA…NNSV, EVPG…HRHL, LTRR…GPRL, and EQEK…ESKG. Residues 68 to 86 are compositionally biased toward polar residues; it reads AAQSPAGQDPATTGISCSP. Residues 111-122 show a composition bias toward basic residues; sequence HSPHRRLSHRHL. Ser-118 is modified (phosphoserine). Residues 152-184 form an interaction with PRKG1 region; the sequence is SEEDKKKNLALLEEAKLVSERFLTRRGRKSRSS. The span at 183–212 shows a compositional bias: polar residues; sequence SSPGESSPAVSPNLSPGASPASSQSNSLTV. Basic and acidic residues predominate over residues 277 to 292; sequence TVEKSKEITIEQKENF. Phosphoserine is present on Ser-393. The tract at residues 534-580 is interaction with ITPR1; it reads NVFVQLSLAFRNDSYTLESRINQAERERNLTEENTEKELENFKASIT. Positions 547-645 form a coiled coil; the sequence is SYTLESRINQ…MQYVENLKRT (99 aa). A phosphoserine mark is found at Ser-683 and Ser-696. Disordered regions lie at residues 706–766 and 787–829; these read LNLP…TPSC and YQEG…KEQR. A compositionally biased stretch (low complexity) spans 708-728; it reads LPGQSPSSSPIPSLPALSESS. A compositionally biased stretch (basic and acidic residues) spans 790–801; the sequence is GLKKTKELQGLR. The segment covering 802 to 825 has biased composition (acidic residues); it reads EEEEEQKSESPEEPEEVAETEEEE. The helical transmembrane segment at 853-873 threads the bilayer; the sequence is VIWMMAAAMLVLTVVLGLYGS.

Interacts with PRKG1/cGKI-beta and ITPR1/IP3R type I. Part of cGMP kinase signaling complex at least composed of ACTA2/alpha-actin, CNN1/calponin H1, PLN/phospholamban, PRKG1 and ITPR1. Interacts with HCN4; regulates HCN4 channel activity. Phosphorylated by PRKG1/cGKI-beta. Phosphorylation at Ser-696 is necessary for PRKG1-induced calcium release in the cytosol. As to expression, highly expressed in trachea, aorta and uterus.

Its subcellular location is the sarcoplasmic reticulum. The protein resides in the cytoplasm. It is found in the perinuclear region. It localises to the membrane. Functionally, plays a role as NO/PRKG1-dependent regulator of IP3-induced calcium release; its phosphorylation by PRKG1 inhibits bradykinin and IP3-induced calcium release from intracellular stores. Recruits PRKG1 to the endoplasmic reticulum and may mediate the assembly of PRKG1 and ITPR1 in a macrocomplex. Involved in PRKG1 signaling cascade leading to inhibition of platelet activation and aggregation. Also mediates NO-dependent inhibition of calcium signaling in gastrointestinal smooth muscle contributing to NO-dependent relaxation. Plays a role in the regulation of cellular excitability by regulating the hyperpolarization-activated cyclic nucleotide-gated HCN4 channel activity. The protein is Inositol 1,4,5-triphosphate receptor associated 1 (IRAG1) of Bos taurus (Bovine).